The chain runs to 218 residues: 3-dehydroquinate dehydratase (218 aa).

3-dehydroquinate is bound by residues 29-31 (EFR) and R56. Residue H116 is the Proton donor/acceptor of the active site. K142 (schiff-base intermediate with substrate) is an active-site residue. 3-dehydroquinate-binding residues include R180, S200, and Q204.

It belongs to the type-I 3-dehydroquinase family. Homodimer.

The catalysed reaction is 3-dehydroquinate = 3-dehydroshikimate + H2O. It participates in metabolic intermediate biosynthesis; chorismate biosynthesis; chorismate from D-erythrose 4-phosphate and phosphoenolpyruvate: step 3/7. Involved in the third step of the chorismate pathway, which leads to the biosynthesis of aromatic amino acids. Catalyzes the cis-dehydration of 3-dehydroquinate (DHQ) and introduces the first double bond of the aromatic ring to yield 3-dehydroshikimate. The protein is 3-dehydroquinate dehydratase of Methanococcus vannielii (strain ATCC 35089 / DSM 1224 / JCM 13029 / OCM 148 / SB).